The primary structure comprises 162 residues: SsrA-binding protein (162 aa).

This sequence belongs to the SmpB family.

It is found in the cytoplasm. Its function is as follows. Required for rescue of stalled ribosomes mediated by trans-translation. Binds to transfer-messenger RNA (tmRNA), required for stable association of tmRNA with ribosomes. tmRNA and SmpB together mimic tRNA shape, replacing the anticodon stem-loop with SmpB. tmRNA is encoded by the ssrA gene; the 2 termini fold to resemble tRNA(Ala) and it encodes a 'tag peptide', a short internal open reading frame. During trans-translation Ala-aminoacylated tmRNA acts like a tRNA, entering the A-site of stalled ribosomes, displacing the stalled mRNA. The ribosome then switches to translate the ORF on the tmRNA; the nascent peptide is terminated with the 'tag peptide' encoded by the tmRNA and targeted for degradation. The ribosome is freed to recommence translation, which seems to be the essential function of trans-translation. The polypeptide is SsrA-binding protein (Shewanella frigidimarina (strain NCIMB 400)).